A 323-amino-acid polypeptide reads, in one-letter code: UPF0612 protein C569.01c (323 aa).

Coiled coils occupy residues 27-63 (IKRY…MKYE) and 131-225 (NEMN…DARS).

Belongs to the UPF0612 family.

In Schizosaccharomyces pombe (strain 972 / ATCC 24843) (Fission yeast), this protein is UPF0612 protein C569.01c.